The chain runs to 291 residues: Syntaxin-1A homolog (291 aa).

Residues 1 to 24 are disordered; it reads MTKDRLSALKAAQSEDEQDDDMHM. Residues 1 to 266 are Cytoplasmic-facing; that stretch reads MTKDRLSALK…QYQSKARRKK (266 aa). Residues 69 to 95 are a coiled coil; sequence NDQKTKEELDELMAVIKRAANKVRGKL. The t-SNARE coiled-coil homology domain maps to 193–255; the sequence is LADIEARHND…DRAVADTKKA (63 aa). The helical; Anchor for type IV membrane protein transmembrane segment at 267-287 threads the bilayer; it reads ICILVTGVILITGLIIFILFY. Topologically, residues 288–291 are extracellular; that stretch reads AKVL.

This sequence belongs to the syntaxin family. In terms of assembly, interacts (via N-terminus, in open or in closed conformation) with unc-18; the interaction is direct. Interaction in open conformation with unc-18 promotes synaptic vesicle docking and tethering. Interaction via N-terminus with unc-18 mediates the secretion of the neurotransmitter acetylcholine from cholinergic motor neurons. Interaction with unc-18 is reduced in the presence of unc-13. Expressed throughout the head ganglion, nerve ring, ventral cord, dorsal cord, intestine, vulva and spermatheca.

The protein localises to the cell membrane. It localises to the cell projection. It is found in the axon. Its subcellular location is the dendrite. The protein resides in the perikaryon. Its function is as follows. Plays a critical role in several secretory processes, including cuticle secretion and neurotransmitter release, and probably assists in neuronal membrane maturation or the final stages of neuronal differentiation. Plays a role in synaptic vesicle docking and tethering through its association with unc-18. Through binding to unc-18 mediates the release of the neurotransmitter acetylcholine from cholinergic motor neurons, and thereby promotes locomotory behaviors. Essential for embryonic viability and development. Has a role in dauer formation and adult life span. Required for locomotion. Probably by regulating neuronal transmission downstream of lin-3 and receptor lin-23 and phospholipase plc-3 and upstream of innexin unc-7 and egl-4/PKG in ALA neurons, involved in the decrease in pharyngeal pumping during the quiescent state that precedes each larval molt. The sequence is that of Syntaxin-1A homolog from Caenorhabditis elegans.